We begin with the raw amino-acid sequence, 156 residues long: MNINATLIGQSVAFLIFVLFCMKFIWPPVIAALHERQKKIADGLDAASRAARDLELAQDKAGQQLREAKAQAAEIIEQAKKRGSQIVDEAREQARVEAERVKAQAQAEIEQELNGVKDALRAQLGSLAVNGAEKILGATIDQNAHAELVNKLAAEI.

A helical membrane pass occupies residues 12-32 (VAFLIFVLFCMKFIWPPVIAA).

It belongs to the ATPase B chain family. In terms of assembly, F-type ATPases have 2 components, F(1) - the catalytic core - and F(0) - the membrane proton channel. F(1) has five subunits: alpha(3), beta(3), gamma(1), delta(1), epsilon(1). F(0) has three main subunits: a(1), b(2) and c(10-14). The alpha and beta chains form an alternating ring which encloses part of the gamma chain. F(1) is attached to F(0) by a central stalk formed by the gamma and epsilon chains, while a peripheral stalk is formed by the delta and b chains.

The protein localises to the cell inner membrane. Functionally, f(1)F(0) ATP synthase produces ATP from ADP in the presence of a proton or sodium gradient. F-type ATPases consist of two structural domains, F(1) containing the extramembraneous catalytic core and F(0) containing the membrane proton channel, linked together by a central stalk and a peripheral stalk. During catalysis, ATP synthesis in the catalytic domain of F(1) is coupled via a rotary mechanism of the central stalk subunits to proton translocation. Component of the F(0) channel, it forms part of the peripheral stalk, linking F(1) to F(0). This is ATP synthase subunit b from Pseudomonas fluorescens (strain ATCC BAA-477 / NRRL B-23932 / Pf-5).